Here is a 449-residue protein sequence, read N- to C-terminus: Methionine aminopeptidase 2 (449 aa).

Residues 1–91 (MAAQAAPELA…PRIPLTTLFP (91 aa)) form a disordered region. Residues 34–50 (EEAENEGDSDDDRDDEQ) are compositionally biased toward acidic residues. Over residues 61-75 (KKKKKKRPKKKKKTA) the composition is skewed to basic residues. Residue histidine 199 coordinates substrate. A divalent metal cation is bound by residues aspartate 219, aspartate 230, and histidine 299. A substrate-binding site is contributed by histidine 307. Residues glutamate 335 and glutamate 430 each contribute to the a divalent metal cation site.

The protein belongs to the peptidase M24A family. Methionine aminopeptidase eukaryotic type 2 subfamily. It depends on Co(2+) as a cofactor. The cofactor is Zn(2+). Mn(2+) is required as a cofactor. Requires Fe(2+) as cofactor.

Its subcellular location is the cytoplasm. It carries out the reaction Release of N-terminal amino acids, preferentially methionine, from peptides and arylamides.. Functionally, cotranslationally removes the N-terminal methionine from nascent proteins. The N-terminal methionine is often cleaved when the second residue in the primary sequence is small and uncharged (Met-Ala-, Cys, Gly, Pro, Ser, Thr, or Val). The sequence is that of Methionine aminopeptidase 2 from Arthroderma benhamiae (strain ATCC MYA-4681 / CBS 112371) (Trichophyton mentagrophytes).